The sequence spans 33 residues: Photosystem II reaction center protein Psb30 (33 aa).

Residues valine 5–leucine 25 form a helical membrane-spanning segment.

The protein belongs to the Psb30/Ycf12 family. PSII is composed of 1 copy each of membrane proteins PsbA, PsbB, PsbC, PsbD, PsbE, PsbF, PsbH, PsbI, PsbJ, PsbK, PsbL, PsbM, PsbT, PsbX, PsbY, PsbZ, Psb30/Ycf12, peripheral proteins of the oxygen-evolving complex and a large number of cofactors. It forms dimeric complexes.

It localises to the plastid. The protein resides in the chloroplast thylakoid membrane. In terms of biological role, a core subunit of photosystem II (PSII), probably helps stabilize the reaction center. The polypeptide is Photosystem II reaction center protein Psb30 (Marchantia polymorpha (Common liverwort)).